A 342-amino-acid polypeptide reads, in one-letter code: Tetraacyldisaccharide 4'-kinase (342 aa).

68-75 (TVGGTGKT) provides a ligand contact to ATP.

It belongs to the LpxK family.

It catalyses the reaction a lipid A disaccharide + ATP = a lipid IVA + ADP + H(+). It participates in glycolipid biosynthesis; lipid IV(A) biosynthesis; lipid IV(A) from (3R)-3-hydroxytetradecanoyl-[acyl-carrier-protein] and UDP-N-acetyl-alpha-D-glucosamine: step 6/6. Its function is as follows. Transfers the gamma-phosphate of ATP to the 4'-position of a tetraacyldisaccharide 1-phosphate intermediate (termed DS-1-P) to form tetraacyldisaccharide 1,4'-bis-phosphate (lipid IVA). This Burkholderia thailandensis (strain ATCC 700388 / DSM 13276 / CCUG 48851 / CIP 106301 / E264) protein is Tetraacyldisaccharide 4'-kinase.